The chain runs to 396 residues: Pyridinium-3,5-bisthiocarboxylic acid mononucleotide nickel insertion protein (396 aa).

The protein belongs to the LarC family.

It catalyses the reaction Ni(II)-pyridinium-3,5-bisthiocarboxylate mononucleotide = pyridinium-3,5-bisthiocarboxylate mononucleotide + Ni(2+). Its function is as follows. Involved in the biosynthesis of a nickel-pincer cofactor ((SCS)Ni(II) pincer complex). Binds Ni(2+), and functions in nickel delivery to pyridinium-3,5-bisthiocarboxylic acid mononucleotide (P2TMN), to form the mature cofactor. Is thus probably required for the activation of nickel-pincer cofactor-dependent enzymes. The polypeptide is Pyridinium-3,5-bisthiocarboxylic acid mononucleotide nickel insertion protein (Moorella thermoacetica (strain ATCC 39073 / JCM 9320)).